The sequence spans 148 residues: Small ribosomal subunit protein uS13 (148 aa).

The disordered stretch occupies residues 128–148 (RGQRTKSTGRRGSTIGVRKKK).

This sequence belongs to the universal ribosomal protein uS13 family. As to quaternary structure, part of the 30S ribosomal subunit. Forms a loose heterodimer with protein S19. Forms two bridges to the 50S subunit in the 70S ribosome.

Located at the top of the head of the 30S subunit, it contacts several helices of the 16S rRNA. In the 70S ribosome it contacts the 23S rRNA (bridge B1a) and protein L5 of the 50S subunit (bridge B1b), connecting the 2 subunits; these bridges are implicated in subunit movement. In Methanococcoides burtonii (strain DSM 6242 / NBRC 107633 / OCM 468 / ACE-M), this protein is Small ribosomal subunit protein uS13.